Here is a 447-residue protein sequence, read N- to C-terminus: Vasoactive intestinal polypeptide receptor (447 aa).

Topologically, residues 1–103 are extracellular; sequence MCDVVNEIEL…VDDDSFFRSV (103 aa). Disulfide bonds link Cys15/Cys36, Cys27/Cys69, and Cys50/Cys86. N-linked (GlcNAc...) asparagine glycosylation is found at Asn17, Asn22, Asn64, and Asn91. Residues 104–128 form a helical membrane-spanning segment; that stretch reads KIGYTIGHSVSLISLTTAIVILCMS. Over 129–135 the chain is Cytoplasmic; it reads RKLHCTR. The helical transmembrane segment at 136–155 threads the bilayer; it reads NYIHMHLFVSFILKAIAVFV. The Extracellular segment spans residues 156–178; the sequence is KDAVLYDVIQESDNCSTASVGCK. N-linked (GlcNAc...) asparagine glycosylation occurs at Asn169. Cysteines 177 and 247 form a disulfide. The helical transmembrane segment at 179–202 threads the bilayer; the sequence is AVIVFFQYCIMASFFWLLVEGLYL. The Cytoplasmic segment spans residues 203–216; it reads HALLAVSFFSERKY. The chain crosses the membrane as a helical span at residues 217 to 238; sequence FWWYILIGWGGPTIFIMAWSFA. The Extracellular segment spans residues 239–256; sequence KAYFNDVGCWDIIENSDL. The helical transmembrane segment at 257–280 threads the bilayer; that stretch reads FWWIIKTPILASILMNFILFICII. Residues 281–305 lie on the Cytoplasmic side of the membrane; it reads RILRQKINCPDIGRNESNQYSRLAK. The helical transmembrane segment at 306–325 threads the bilayer; the sequence is STLLLIPLFGINFIIFAFIP. Over 326 to 337 the chain is Extracellular; the sequence is ENIKTELRLVFD. The chain crosses the membrane as a helical span at residues 338–357; it reads LILGSFQGFVVAVLYCFLNG. Topologically, residues 358-447 are cytoplasmic; that stretch reads EVQAEIKRKW…KGHEDVREVS (90 aa).

Belongs to the G-protein coupled receptor 2 family.

Its subcellular location is the cell membrane. Its function is as follows. This is a receptor for VIP. The activity of this receptor is mediated by G proteins which activate adenylyl cyclase. This is Vasoactive intestinal polypeptide receptor (vipr1) from Carassius auratus (Goldfish).